Here is a 263-residue protein sequence, read N- to C-terminus: HTH-type transcriptional repressor NanR (263 aa).

Residues 1 to 24 (MSPMNAFDSQTEDSSPAIGRNLRS) are disordered. An HTH gntR-type domain is found at 30–98 (KKLSEMVEEE…NGERARVSRP (69 aa)). The segment at residues 58-77 (ERELMAFFNVGRPSVREALA) is a DNA-binding region (H-T-H motif).

It belongs to the NanR family.

Transcriptional repressor that controls expression of the genes required for the catabolism of sialic acids. The polypeptide is HTH-type transcriptional repressor NanR (Escherichia coli O127:H6 (strain E2348/69 / EPEC)).